The sequence spans 414 residues: Arrestin domain-containing protein 3 (414 aa).

2 short sequence motifs (PPxY motif) span residues 346–349 (PPSY) and 391–394 (PPLY). Residues 393 to 414 (LYSEIDPNPDQSSEDRPSCPSR) form a disordered region. Over residues 405 to 414 (SEDRPSCPSR) the composition is skewed to basic and acidic residues.

This sequence belongs to the arrestin family. In terms of assembly, interacts (via PPxY motifs) with NEDD4 (via WW domains). Interacts with ADRB2. Interacts with ADRB3. Interacts with HGS (via PPxY motifs). Does not bind TXN (thioredoxin). Interacts with ITCH. In terms of tissue distribution, detected in visceral fat, subcutaneous fat, brown fat and skeletal muscle, and at lower levels in kidney.

The protein resides in the cytoplasm. It is found in the cell membrane. It localises to the lysosome. The protein localises to the endosome. Its subcellular location is the early endosome. Adapter protein that plays a role in regulating cell-surface expression of adrenergic receptors and probably also other G protein-coupled receptors. Plays a role in NEDD4-mediated ubiquitination and endocytosis af activated ADRB2 and subsequent ADRB2 degradation. May recruit NEDD4 to ADRB2. Alternatively, may function as adapter protein that does not play a major role in recruiting NEDD4 to ADRB2, but rather plays a role in a targeting ADRB2 to endosomes. The polypeptide is Arrestin domain-containing protein 3 (Arrdc3) (Mus musculus (Mouse)).